We begin with the raw amino-acid sequence, 591 residues long: Isocitrate dehydrogenase kinase/phosphatase (591 aa).

Residues 315 to 321 (APGVKGM) and lysine 336 each bind ATP. The active site involves aspartate 371.

The protein belongs to the AceK family.

It localises to the cytoplasm. It catalyses the reaction L-seryl-[isocitrate dehydrogenase] + ATP = O-phospho-L-seryl-[isocitrate dehydrogenase] + ADP + H(+). In terms of biological role, bifunctional enzyme which can phosphorylate or dephosphorylate isocitrate dehydrogenase (IDH) on a specific serine residue. This is a regulatory mechanism which enables bacteria to bypass the Krebs cycle via the glyoxylate shunt in response to the source of carbon. When bacteria are grown on glucose, IDH is fully active and unphosphorylated, but when grown on acetate or ethanol, the activity of IDH declines drastically concomitant with its phosphorylation. The sequence is that of Isocitrate dehydrogenase kinase/phosphatase from Pectobacterium atrosepticum (strain SCRI 1043 / ATCC BAA-672) (Erwinia carotovora subsp. atroseptica).